Reading from the N-terminus, the 131-residue chain is Neurophysin 2 (131 aa).

Intrachain disulfides connect Cys10-Cys55, Cys13-Cys27, Cys21-Cys45, Cys28-Cys35, Cys62-Cys74, Cys68-Cys86, and Cys75-Cys80.

This sequence belongs to the vasopressin/oxytocin family.

It localises to the secreted. Functionally, neurophysin 2 specifically binds vasopressin. The polypeptide is Neurophysin 2 (Anser anser anser (Western greylag goose)).